We begin with the raw amino-acid sequence, 420 residues long: D-tagatose-1,6-bisphosphate aldolase subunit GatZ (420 aa).

It belongs to the GatZ/KbaZ family. GatZ subfamily. As to quaternary structure, forms a complex with GatY.

The protein operates within carbohydrate metabolism; D-tagatose 6-phosphate degradation; D-glyceraldehyde 3-phosphate and glycerone phosphate from D-tagatose 6-phosphate: step 2/2. In terms of biological role, component of the tagatose-1,6-bisphosphate aldolase GatYZ that is required for full activity and stability of the Y subunit. Could have a chaperone-like function for the proper and stable folding of GatY. When expressed alone, GatZ does not show any aldolase activity. Is involved in the catabolism of galactitol. The polypeptide is D-tagatose-1,6-bisphosphate aldolase subunit GatZ (Escherichia coli O17:K52:H18 (strain UMN026 / ExPEC)).